The sequence spans 244 residues: Phosphoadenosine 5'-phosphosulfate reductase (244 aa).

Cys239 functions as the Nucleophile; cysteine thiosulfonate intermediate in the catalytic mechanism.

This sequence belongs to the PAPS reductase family. CysH subfamily.

It is found in the cytoplasm. It catalyses the reaction [thioredoxin]-disulfide + sulfite + adenosine 3',5'-bisphosphate + 2 H(+) = [thioredoxin]-dithiol + 3'-phosphoadenylyl sulfate. It functions in the pathway sulfur metabolism; hydrogen sulfide biosynthesis; sulfite from sulfate: step 3/3. Its function is as follows. Catalyzes the formation of sulfite from phosphoadenosine 5'-phosphosulfate (PAPS) using thioredoxin as an electron donor. This Salmonella arizonae (strain ATCC BAA-731 / CDC346-86 / RSK2980) protein is Phosphoadenosine 5'-phosphosulfate reductase.